Consider the following 361-residue polypeptide: Protein-L-isoaspartate O-methyltransferase domain-containing protein 2 (361 aa).

Residue Gly2 is the site of N-myristoyl glycine attachment. Residue Ser64 is part of the active site. 3 adoMet binding motif regions span residues 85–94, 160–164, and 181–191; these read LNLGSGTGYL, YDRVY, and LKVGGILVMPL. The interval 240–250 is BC-box; the sequence is VRSLQDLARIA. The span at 303-312 shows a compositional bias: polar residues; it reads SNPSDDNSSG. The disordered stretch occupies residues 303-335; the sequence is SNPSDDNSSGDLEEERREEEATTPPDAKPEPPV. The CUL-box stretch occupies residues 345–348; that stretch reads LPLP.

The protein belongs to the methyltransferase superfamily. L-isoaspartyl/D-aspartyl protein methyltransferase family.

Its subcellular location is the cytoplasm. Functionally, may act as a substrate recognition component of an ECS (Elongin BC-CUL5-SOCS-box protein) E3 ubiquitin ligase complex which mediates the ubiquitination and subsequent proteasomal degradation of target proteins. May bind to the methyltransferase cofactor S-adenosylmethionine (AdoMet) via the N-terminal AdoMet binding motif, but probably does not display methyltransferase activity. The sequence is that of Protein-L-isoaspartate O-methyltransferase domain-containing protein 2 (PCMTD2) from Bos taurus (Bovine).